A 446-amino-acid chain; its full sequence is DDB1- and CUL4-associated factor 12 (446 aa).

Residues 1–12 (MTRRAVSRKRRA) are compositionally biased toward basic residues. The tract at residues 1 to 33 (MTRRAVSRKRRAAPGTGPGEQSDWDHSAHKRKR) is disordered. WD repeat units follow at residues 132–173 (SHQS…PVCV), 177–215 (GHND…LSKS), 245–284 (PVNC…AKLL), and 333–370 (EQGS…FLED).

The protein belongs to the WD repeat DCAF12 family. Component of the DCX(DCAF12) E3 ubiquitin ligase complex, at least composed of cul4 (cul4a or cul4b), ddb1, dcaf12 and rbx1.

It is found in the cytoplasm. The protein resides in the cytoskeleton. The protein localises to the microtubule organizing center. Its subcellular location is the centrosome. It localises to the nucleus. It functions in the pathway protein modification; protein ubiquitination. Its function is as follows. Substrate-recognition component of a DCX (DDB1-CUL4-X-box) E3 ubiquitin-protein ligase complex of the DesCEND (destruction via C-end degrons) pathway, which recognizes a C-degron located at the extreme C terminus of target proteins, leading to their ubiquitination and degradation. The C-degron recognized by the DesCEND pathway is usually a motif of less than ten residues and can be present in full-length proteins, truncated proteins or proteolytically cleaved forms. The DCX(DCAF12) complex specifically recognizes proteins with a diglutamate (Glu-Glu) at the C-terminus leading to their ubiquitination and degradation. Also directly recognizes the C-terminal glutamate-leucine (Glu-Leu) degron as an alternative degron in proteins leading to their ubiquitination and degradation. This is DDB1- and CUL4-associated factor 12 from Xenopus tropicalis (Western clawed frog).